The following is a 306-amino-acid chain: UDP-N-acetylenolpyruvoylglucosamine reductase (306 aa).

Positions 28–194 (KIGNISKLFL…LKTELNLKKE (167 aa)) constitute an FAD-binding PCMH-type domain. Catalysis depends on Ser-223, which acts as the Proton donor. The active site involves Glu-295.

Belongs to the MurB family. FAD is required as a cofactor.

The protein localises to the cytoplasm. It carries out the reaction UDP-N-acetyl-alpha-D-muramate + NADP(+) = UDP-N-acetyl-3-O-(1-carboxyvinyl)-alpha-D-glucosamine + NADPH + H(+). The protein operates within cell wall biogenesis; peptidoglycan biosynthesis. In terms of biological role, cell wall formation. The protein is UDP-N-acetylenolpyruvoylglucosamine reductase of Borrelia garinii subsp. bavariensis (strain ATCC BAA-2496 / DSM 23469 / PBi) (Borreliella bavariensis).